A 1231-amino-acid chain; its full sequence is ATP-dependent RNA helicase DHX30 (1231 aa).

Residues 39-65 (PDGLEGARQEDEEEQPPPPGAEEQSTA) form a disordered region. DRBM domains follow at residues 80–148 (PKNL…CQLF) and 292–359 (PKNL…CQKL). The Helicase ATP-binding domain maps to 488-656 (LSAIEQNPVV…FGGCPVVKVP (169 aa)). 501-508 (GDTGCGKT) is a binding site for ATP. Positions 603-606 (DEVH) match the DEAH box motif. Residues 697–870 (LITDLVLQID…NLVVQAKIHM (174 aa)) enclose the Helicase C-terminal domain.

Belongs to the DEAD box helicase family. DEAH subfamily.

It is found in the cytoplasm. It localises to the mitochondrion. Its subcellular location is the mitochondrion matrix. The protein resides in the mitochondrion nucleoid. It carries out the reaction ATP + H2O = ADP + phosphate + H(+). Its function is as follows. RNA-dependent helicase. Plays an important role in the assembly of the mitochondrial large ribosomal subunit. Required for optimal function of the zinc-finger antiviral protein ZC3HAV1. Associates with mitochondrial DNA. Involved in nervous system development and differentiation through its involvement in the up-regulation of a number of genes which are required for neurogenesis, including GSC, NCAM1, neurogenin, and NEUROD. The chain is ATP-dependent RNA helicase DHX30 (DHX30) from Gallus gallus (Chicken).